The primary structure comprises 301 residues: Phosphonates import ATP-binding protein PhnC (301 aa).

The ABC transporter domain maps to 8–256 (IRIERLSKTF…LLKTLYGDEA (249 aa)). ATP is bound at residue 41-48 (GASGSGKS). Positions 264–287 (AQGPDDTESKNTADNTPLQDAAPA) are disordered.

The protein belongs to the ABC transporter superfamily. Phosphonates importer (TC 3.A.1.9.1) family. The complex is composed of two ATP-binding proteins (PhnC), two transmembrane proteins (PhnE) and a solute-binding protein (PhnD).

It is found in the cell inner membrane. It catalyses the reaction phosphonate(out) + ATP + H2O = phosphonate(in) + ADP + phosphate + H(+). Its function is as follows. Part of the ABC transporter complex PhnCDE involved in phosphonates import. Responsible for energy coupling to the transport system. In Paraburkholderia xenovorans (strain LB400), this protein is Phosphonates import ATP-binding protein PhnC.